The following is a 185-amino-acid chain: Pectinesterase inhibitor (185 aa).

The first 32 residues, 1–32 (MAFSYCSSSLFVSLLLVILFISPLSQRPSVKA), serve as a signal peptide directing secretion. 2 disulfides stabilise this stretch: C41/C50 and C106/C146. A propeptide is located at residue K185.

It belongs to the PMEI family. Fruit.

The protein resides in the cytoplasm. Functionally, inhibits pectin methylesterase; may be involved in the regulation of fruit ripening. This Actinidia deliciosa (Kiwi) protein is Pectinesterase inhibitor (PMEI).